Reading from the N-terminus, the 85-residue chain is Large ribosomal subunit protein bL31B (85 aa).

Belongs to the bacterial ribosomal protein bL31 family. Type B subfamily. Part of the 50S ribosomal subunit.

This Clavibacter sepedonicus (Clavibacter michiganensis subsp. sepedonicus) protein is Large ribosomal subunit protein bL31B.